Here is a 794-residue protein sequence, read N- to C-terminus: uncharacterized protein (794 aa).

Positions Met-1–Ala-22 are cleaved as a signal peptide. The N-palmitoyl cysteine moiety is linked to residue Cys-23. Cys-23 is lipidated: S-diacylglycerol cysteine. The segment covering Ser-177–Leu-196 has biased composition (polar residues). 3 disordered regions span residues Ser-177 to Ser-208, Ala-220 to Ile-257, and Lys-466 to Ser-506. A compositionally biased stretch (low complexity) spans Ala-220–Lys-231. Over residues Asp-238–Ala-250 the composition is skewed to polar residues.

It belongs to the MG185/MG260 family.

The protein resides in the cell membrane. This is an uncharacterized protein from Mycoplasma pneumoniae (strain ATCC 29342 / M129 / Subtype 1) (Mycoplasmoides pneumoniae).